Here is a 281-residue protein sequence, read N- to C-terminus: MEMO1 family protein APE_1771 (281 aa).

This sequence belongs to the MEMO1 family.

In Aeropyrum pernix (strain ATCC 700893 / DSM 11879 / JCM 9820 / NBRC 100138 / K1), this protein is MEMO1 family protein APE_1771.